The chain runs to 481 residues: Proline--tRNA ligase (481 aa).

Belongs to the class-II aminoacyl-tRNA synthetase family. ProS type 3 subfamily. As to quaternary structure, homodimer.

The protein resides in the cytoplasm. The enzyme catalyses tRNA(Pro) + L-proline + ATP = L-prolyl-tRNA(Pro) + AMP + diphosphate. Its function is as follows. Catalyzes the attachment of proline to tRNA(Pro) in a two-step reaction: proline is first activated by ATP to form Pro-AMP and then transferred to the acceptor end of tRNA(Pro). This Saccharolobus islandicus (strain M.16.27) (Sulfolobus islandicus) protein is Proline--tRNA ligase.